A 515-amino-acid polypeptide reads, in one-letter code: Methionine--tRNA ligase (515 aa).

The 'HIGH' region signature appears at 13–23 (AYPNGKPHIGH). Residues 300 to 304 (KMSKS) carry the 'KMSKS' region motif. An ATP-binding site is contributed by Lys-303.

This sequence belongs to the class-I aminoacyl-tRNA synthetase family. MetG type 2B subfamily. As to quaternary structure, monomer.

The protein localises to the cytoplasm. The catalysed reaction is tRNA(Met) + L-methionine + ATP = L-methionyl-tRNA(Met) + AMP + diphosphate. In terms of biological role, is required not only for elongation of protein synthesis but also for the initiation of all mRNA translation through initiator tRNA(fMet) aminoacylation. This chain is Methionine--tRNA ligase, found in Brucella suis biovar 1 (strain 1330).